Reading from the N-terminus, the 98-residue chain is NADH-ubiquinone oxidoreductase chain 4L (98 aa).

Transmembrane regions (helical) follow at residues 1–21 (MTPT…GLAF), 26–46 (LLSA…ALSL), and 59–79 (APML…ALLV).

The protein belongs to the complex I subunit 4L family.

The protein localises to the mitochondrion membrane. The enzyme catalyses a ubiquinone + NADH + 5 H(+)(in) = a ubiquinol + NAD(+) + 4 H(+)(out). Its function is as follows. Core subunit of the mitochondrial membrane respiratory chain NADH dehydrogenase (Complex I) which catalyzes electron transfer from NADH through the respiratory chain, using ubiquinone as an electron acceptor. Part of the enzyme membrane arm which is embedded in the lipid bilayer and involved in proton translocation. The sequence is that of NADH-ubiquinone oxidoreductase chain 4L (MT-ND4L) from Gadus morhua (Atlantic cod).